A 1165-amino-acid polypeptide reads, in one-letter code: Tectonin beta-propeller repeat-containing protein 1 (1165 aa).

4 TECPR repeats span residues 209-240 (LSVW…SLLD), 254-285 (DLLW…SIVE), 301-332 (SVVW…IEMV), and 344-376 (DQVW…KAII). 5 positions are modified to phosphoserine: S386, S388, S391, S412, and S417. Positions 404 to 486 (RGSGESAPSD…GPAPTPAELP (83 aa)) are disordered. The region spanning 611 to 717 (KTGALQWWCD…WLALLSLSCC (107 aa)) is the PH domain. One copy of the TECPR 5 repeat lies at 729–756 (QAIWSITCKGDIFVSEPSPDLEAHEHPL). Phosphoserine occurs at positions 938 and 949. TECPR repeat units follow at residues 953-984 (IALW…LHVG), 998-1029 (YQVW…YHIP), 1044-1075 (TSVY…EHVS), and 1087-1127 (DQVW…DYGI). The interval 1140–1165 (ATRAPRSSSQEQEPSAPPEAHGPVCC) is disordered. The segment covering 1143–1153 (APRSSSQEQEP) has biased composition (low complexity).

The protein belongs to the TECPR1 family. As to quaternary structure, interacts with ATG5; the interaction is direct. Interacts with WIPI2. Interacts with the ATG5-ATG12 conjugate, the interaction is however mutually exclusive with ATG16, since it does not interact with ATG12-ATG5-ATG16 complex.

It is found in the cytoplasmic vesicle. It localises to the autophagosome membrane. Its subcellular location is the lysosome membrane. Tethering factor involved in autophagy. Involved in autophagosome maturation by promoting the autophagosome fusion with lysosomes: acts by associating with both the ATG5-ATG12 conjugate and phosphatidylinositol-3-phosphate (PtdIns(3)P) present at the surface of autophagosomes. Also involved in selective autophagy against bacterial pathogens, by being required for phagophore/preautophagosomal structure biogenesis and maturation. This chain is Tectonin beta-propeller repeat-containing protein 1 (TECPR1), found in Homo sapiens (Human).